A 123-amino-acid polypeptide reads, in one-letter code: Late histone H2B.L3 (123 aa).

A compositionally biased stretch (low complexity) spans 1 to 10 (MPAKAQAAGK). The segment at 1–32 (MPAKAQAAGKKGSKKAKAPKPSGDKKRRRKRK) is disordered. An O-linked (GlcNAc) serine glycan is attached at Ser-110. Residue Lys-118 forms a Glycyl lysine isopeptide (Lys-Gly) (interchain with G-Cter in ubiquitin) linkage.

This sequence belongs to the histone H2B family. The nucleosome is a histone octamer containing two molecules each of H2A, H2B, H3 and H4 assembled in one H3-H4 heterotetramer and two H2A-H2B heterodimers. The octamer wraps approximately 147 bp of DNA. Post-translationally, monoubiquitination of Lys-118 gives a specific tag for epigenetic transcriptional activation and is also prerequisite for histone H3 'Lys-4' and 'Lys-79' methylation. GlcNAcylation at Ser-110 promotes monoubiquitination of Lys-118. It fluctuates in response to extracellular glucose, and associates with transcribed genes.

It localises to the nucleus. The protein localises to the chromosome. Functionally, core component of nucleosome. Nucleosomes wrap and compact DNA into chromatin, limiting DNA accessibility to the cellular machineries which require DNA as a template. Histones thereby play a central role in transcription regulation, DNA repair, DNA replication and chromosomal stability. DNA accessibility is regulated via a complex set of post-translational modifications of histones, also called histone code, and nucleosome remodeling. This Strongylocentrotus purpuratus (Purple sea urchin) protein is Late histone H2B.L3.